The primary structure comprises 525 residues: Ankyrin repeat and SOCS box protein 3 (525 aa).

ANK repeat units lie at residues Asp-9 to Val-38, Arg-42 to Tyr-71, Glu-78 to Ala-107, Glu-111 to Gly-140, Cys-145 to Cys-174, Phe-178 to Cys-207, Asp-211 to Leu-240, Asn-246 to Asp-275, Asn-279 to Ala-308, Gly-315 to Glu-346, and His-348 to Pro-373. The SOCS box domain maps to Met-441–Leu-505.

This sequence belongs to the ankyrin SOCS box (ASB) family. In terms of assembly, interacts with ELOB and TNFRSF1B.

It participates in protein modification; protein ubiquitination. Its function is as follows. Probable substrate-recognition component of a SCF-like ECS (Elongin-Cullin-SOCS-box protein) E3 ubiquitin-protein ligase complex which mediates the ubiquitination and subsequent proteasomal degradation of target proteins. Recognizes TNFRSF1B. This is Ankyrin repeat and SOCS box protein 3 (ASB3) from Bos taurus (Bovine).